A 341-amino-acid polypeptide reads, in one-letter code: tRNA N6-adenosine threonylcarbamoyltransferase (341 aa).

Positions 115 and 119 each coordinate Fe cation. Substrate-binding positions include L138–G142, D171, G184, and N276. Fe cation is bound at residue D304.

The protein belongs to the KAE1 / TsaD family. Fe(2+) is required as a cofactor.

The protein resides in the cytoplasm. It carries out the reaction L-threonylcarbamoyladenylate + adenosine(37) in tRNA = N(6)-L-threonylcarbamoyladenosine(37) in tRNA + AMP + H(+). Its function is as follows. Required for the formation of a threonylcarbamoyl group on adenosine at position 37 (t(6)A37) in tRNAs that read codons beginning with adenine. Is involved in the transfer of the threonylcarbamoyl moiety of threonylcarbamoyl-AMP (TC-AMP) to the N6 group of A37, together with TsaE and TsaB. TsaD likely plays a direct catalytic role in this reaction. The polypeptide is tRNA N6-adenosine threonylcarbamoyltransferase (Stenotrophomonas maltophilia (strain R551-3)).